Here is a 749-residue protein sequence, read N- to C-terminus: Cytosolic phospholipase A2 (749 aa).

The region spanning Met1 to Phe124 is the C2 domain. The segment at Met1–Thr178 is phospholipid binding. Ca(2+) is bound by residues Asp40, Thr41, Asp43, Asn65, Asp93, Ala94, and Asn95. The PLA2c domain occupies Val138–His740. Catalysis depends on Ser229, which acts as the Nucleophile. The disordered stretch occupies residues His428–Ala452. The span at Gln442–Ala452 shows a compositional bias: basic and acidic residues. The active-site Proton acceptor is Asp549. Positions Ser729–Met749 are disordered. Positions Val733–Met749 are enriched in basic and acidic residues.

The protein resides in the cytoplasm. It is found in the cytoplasmic vesicle. It catalyses the reaction a 1,2-diacyl-sn-glycero-3-phosphocholine + H2O = a 1-acyl-sn-glycero-3-phosphocholine + a fatty acid + H(+). The catalysed reaction is a 1-acyl-sn-glycero-3-phosphocholine + H2O = sn-glycerol 3-phosphocholine + a fatty acid + H(+). Stimulated by agonists such as ATP, EGF, thrombin and bradykinin as well as by cytosolic Ca(2+). Its function is as follows. Selectively hydrolyzes arachidonyl phospholipids in the sn-2 position releasing arachidonic acid. Together with its lysophospholipid activity, it is implicated in the initiation of the inflammatory response. The protein is Cytosolic phospholipase A2 (pla2g4a) of Xenopus laevis (African clawed frog).